Here is a 209-residue protein sequence, read N- to C-terminus: Large ribosomal subunit protein uL3 (209 aa).

Belongs to the universal ribosomal protein uL3 family. In terms of assembly, part of the 50S ribosomal subunit. Forms a cluster with proteins L14 and L19.

In terms of biological role, one of the primary rRNA binding proteins, it binds directly near the 3'-end of the 23S rRNA, where it nucleates assembly of the 50S subunit. This is Large ribosomal subunit protein uL3 from Carboxydothermus hydrogenoformans (strain ATCC BAA-161 / DSM 6008 / Z-2901).